We begin with the raw amino-acid sequence, 287 residues long: Probable F-box protein At5g04010 (287 aa).

Positions 50 to 101 (PSPPSWEILCLVGPYMDPESLAVASCVSTTWSKCFSSEDLWKSLPATRHSIF) constitute an F-box; degenerate domain.

This Arabidopsis thaliana (Mouse-ear cress) protein is Probable F-box protein At5g04010 (NSFBx).